Here is a 318-residue protein sequence, read N- to C-terminus: Esterase FVEG_12639 (318 aa).

Residues S156, D255, and H285 contribute to the active site.

It belongs to the AB hydrolase 3 family.

Esterase; part of the Fusarium detoxification of benzoxazolinone cluster 2 (FDB2) involved in the degradation of benzoxazolinones produced by the host plant. Maize, wheat, and rye produce the 2 benzoxazinone phytoanticipins 2,4-dihy-droxy-7-methoxy-1,4-benzoxazin-3-one (DIMBOA) and 2,4-dihydroxy-1,4-benzoxazin-3-one (DIBOA) that, due to their inherent instability once released, spontaneously degrade to the more stable corresponding benzoxazolinones, 6-methoxy-2-benzoxazolinone (MBOA) and 2-benzoxazolinone (BOA), respectively. The first step in the detoxification of benzoxazolinones involves the hydrolysis of the cyclic ester bond of benzoxazolinones by the FDB1 cluster gamma-lactamase MBL1 to aminophenols. MBL1 is able to convert BOA into 2-aminophenol (2-AP), as well as MBOA into 5-methoxy-2-aminophenol (2-AMP). The FDB2 cluster N-malonyltransferase FDB2/NAT1 then metabolizes aminophenols via N-malonylation to non-toxic malonamic acids. FDB2/NAT1 converts 2-AP into N-(2-hydroxyphenyl) malonamic acid (HPMA) and 2-AMP into N-(2-hydroxy-4-methoxyphenyl) malonamic acid (HMPMA). The duplicated dienlactone hydrolases DLH1 and DLH2 may provide redundant function for hydrolyzing the lactone moiety in the BOA molecule. The roles of the amidases an other enzymes encoded by the 2 FDB clusters have not been identified so far. This is Esterase FVEG_12639 from Gibberella moniliformis (strain M3125 / FGSC 7600) (Maize ear and stalk rot fungus).